Consider the following 93-residue polypeptide: Pyrimidine/purine nucleoside phosphorylase (93 aa).

It belongs to the nucleoside phosphorylase PpnP family.

The enzyme catalyses a purine D-ribonucleoside + phosphate = a purine nucleobase + alpha-D-ribose 1-phosphate. The catalysed reaction is adenosine + phosphate = alpha-D-ribose 1-phosphate + adenine. It carries out the reaction cytidine + phosphate = cytosine + alpha-D-ribose 1-phosphate. It catalyses the reaction guanosine + phosphate = alpha-D-ribose 1-phosphate + guanine. The enzyme catalyses inosine + phosphate = alpha-D-ribose 1-phosphate + hypoxanthine. The catalysed reaction is thymidine + phosphate = 2-deoxy-alpha-D-ribose 1-phosphate + thymine. It carries out the reaction uridine + phosphate = alpha-D-ribose 1-phosphate + uracil. It catalyses the reaction xanthosine + phosphate = alpha-D-ribose 1-phosphate + xanthine. Functionally, catalyzes the phosphorolysis of diverse nucleosides, yielding D-ribose 1-phosphate and the respective free bases. Can use uridine, adenosine, guanosine, cytidine, thymidine, inosine and xanthosine as substrates. Also catalyzes the reverse reactions. The sequence is that of Pyrimidine/purine nucleoside phosphorylase from Aliivibrio salmonicida (strain LFI1238) (Vibrio salmonicida (strain LFI1238)).